Reading from the N-terminus, the 424-residue chain is Tyrosine--tRNA ligase (424 aa).

L-tyrosine is bound at residue Y37. Residues 42–51 carry the 'HIGH' region motif; it reads PTADSLHLGH. Y175 and Q179 together coordinate L-tyrosine. Residues 235 to 239 carry the 'KMSKS' region motif; the sequence is KFGKT. Residue K238 coordinates ATP. In terms of domain architecture, S4 RNA-binding spans 357-414; the sequence is ADLQQALVNAELVPSRGQARTMISSNAVAINGEKQSDPEYAFTDADRLFGRYTLLRRG.

It belongs to the class-I aminoacyl-tRNA synthetase family. TyrS type 1 subfamily. Homodimer.

The protein resides in the cytoplasm. The enzyme catalyses tRNA(Tyr) + L-tyrosine + ATP = L-tyrosyl-tRNA(Tyr) + AMP + diphosphate + H(+). In terms of biological role, catalyzes the attachment of tyrosine to tRNA(Tyr) in a two-step reaction: tyrosine is first activated by ATP to form Tyr-AMP and then transferred to the acceptor end of tRNA(Tyr). In Yersinia enterocolitica serotype O:8 / biotype 1B (strain NCTC 13174 / 8081), this protein is Tyrosine--tRNA ligase.